The primary structure comprises 314 residues: Putative S-adenosyl-L-methionine-dependent methyltransferase MUL_4402 (314 aa).

S-adenosyl-L-methionine contacts are provided by residues D132 and 161–162 (DL). The segment at 291–314 (RPVPDDAEGPVPPTLFVSAHRPAA) is disordered.

Belongs to the UPF0677 family.

Functionally, exhibits S-adenosyl-L-methionine-dependent methyltransferase activity. This is Putative S-adenosyl-L-methionine-dependent methyltransferase MUL_4402 from Mycobacterium ulcerans (strain Agy99).